Reading from the N-terminus, the 152-residue chain is Ribonuclease pancreatic (152 aa).

Positions 1–24 (MALDKSVILLPLLVLVLLVLGCLG) are cleaved as a signal peptide. Substrate contacts are provided by lysine 31 and arginine 34. The active-site Proton acceptor is histidine 36. Asparagine 46 carries N-linked (GlcNAc...) asparagine glycosylation. 4 cysteine pairs are disulfide-bonded: cysteine 50–cysteine 108, cysteine 64–cysteine 119, cysteine 82–cysteine 134, and cysteine 89–cysteine 96. Substrate contacts are provided by residues 65–69 (KPVNT), lysine 90, and arginine 109. N-linked (GlcNAc...) asparagine glycosylation occurs at asparagine 112. Histidine 143 (proton donor) is an active-site residue.

The protein belongs to the pancreatic ribonuclease family. As to quaternary structure, monomer. Interacts with and forms tight 1:1 complexes with RNH1. Dimerization of two such complexes may occur. Interaction with RNH1 inhibits this protein.

Its subcellular location is the secreted. The enzyme catalyses an [RNA] containing cytidine + H2O = an [RNA]-3'-cytidine-3'-phosphate + a 5'-hydroxy-ribonucleotide-3'-[RNA].. The catalysed reaction is an [RNA] containing uridine + H2O = an [RNA]-3'-uridine-3'-phosphate + a 5'-hydroxy-ribonucleotide-3'-[RNA].. In terms of biological role, endonuclease that catalyzes the cleavage of RNA on the 3' side of pyrimidine nucleotides. Acts on single-stranded and double-stranded RNA. This chain is Ribonuclease pancreatic (RNASE1), found in Miopithecus talapoin (Angolan talapoin).